A 310-amino-acid polypeptide reads, in one-letter code: Olfactory receptor 2A7 (310 aa).

Over 1 to 24 (MGDNITSITEFLLLGFPVGPRIQM) the chain is Extracellular. An N-linked (GlcNAc...) asparagine glycan is attached at Asn4. A helical transmembrane segment spans residues 25-48 (LLFGLFSLFYVFTLLGNGTILGLI). At 49 to 56 (SLDSRLHA) the chain is on the cytoplasmic side. A helical transmembrane segment spans residues 57 to 78 (PMYFFLSHLAVVDIAYACNTVP). The Extracellular segment spans residues 79–99 (RMLVNLLHPAKPISFAGRMMQ). A helical membrane pass occupies residues 100-119 (TFLFSTFAVTECLLLVVMSY). At 120 to 138 (DLYVAICHPLRYLAIMTWR) the chain is on the cytoplasmic side. The chain crosses the membrane as a helical span at residues 139 to 157 (VCITLAVTSWTTGVLLSLI). The Extracellular segment spans residues 158-194 (HLVLLLPLPFCRPQKIYHFFCEILAVLKLACADTHIN). A helical transmembrane segment spans residues 195–218 (ENMVLAGAISGLVGPLSTIVVSYM). At 219 to 235 (CILCAILQIQSREVQRK) the chain is on the cytoplasmic side. The helical transmembrane segment at 236–258 (AFCTCFSHLCVIGLFYGTAIIMY) threads the bilayer. Residues 259-271 (VGPRYGNPKEQKK) lie on the Extracellular side of the membrane. The helical transmembrane segment at 272–291 (YLLLFHSLFNPMLNPLICSL) threads the bilayer. Residues 292 to 310 (RNSEVKNTLKRVLGVERAL) lie on the Cytoplasmic side of the membrane.

It belongs to the G-protein coupled receptor 1 family.

It is found in the cell membrane. Odorant receptor. This Homo sapiens (Human) protein is Olfactory receptor 2A7 (OR2A7).